Reading from the N-terminus, the 266-residue chain is Phosphatidate cytidylyltransferase (266 aa).

8 helical membrane passes run 16 to 36, 52 to 72, 78 to 98, 101 to 121, 125 to 145, 164 to 184, 186 to 206, and 237 to 257; these read VVLIVVAGLILYADNLLLFWA, LFQVKASFSLYLILVLSWVAA, PVECALISAMVMASVIAYQKA, SEAILPFLYPGVGFFALFGVY, GAVAIIWLLVVVVASDVGAFF, LEGALIGVVLASVLGSFVGMG, LSGGFLMALLFSFLIALMAVF, and LDSMLFGALSLHVLLYFLEIW.

Belongs to the CDS family.

It localises to the cell inner membrane. The enzyme catalyses a 1,2-diacyl-sn-glycero-3-phosphate + CTP + H(+) = a CDP-1,2-diacyl-sn-glycerol + diphosphate. The protein operates within phospholipid metabolism; CDP-diacylglycerol biosynthesis; CDP-diacylglycerol from sn-glycerol 3-phosphate: step 3/3. In Helicobacter pylori (strain J99 / ATCC 700824) (Campylobacter pylori J99), this protein is Phosphatidate cytidylyltransferase (cdsA).